We begin with the raw amino-acid sequence, 126 residues long: Protein ApaG (126 aa).

The region spanning 2–126 (SDPRYQIDVS…FRLAVPGALH (125 aa)) is the ApaG domain.

The polypeptide is Protein ApaG (Pseudomonas fluorescens (strain SBW25)).